The sequence spans 117 residues: Nascent polypeptide-associated complex protein (117 aa).

Residues 9–77 (PKQLKQMQRA…ARECDLEAEV (69 aa)) form the NAC-A/B domain.

The protein belongs to the NAC-alpha family. Homodimer. Interacts with the ribosome. Binds ribosomal RNA.

Functionally, contacts the emerging nascent chain on the ribosome. This is Nascent polypeptide-associated complex protein from Methanothermobacter marburgensis (strain ATCC BAA-927 / DSM 2133 / JCM 14651 / NBRC 100331 / OCM 82 / Marburg) (Methanobacterium thermoautotrophicum).